The following is a 218-amino-acid chain: Cytochrome b6 (218 aa).

The helical transmembrane segment at 35-55 threads the bilayer; sequence IFYCLGGITLVCFLIQFATGF. Cysteine 38 contributes to the heme c binding site. Residues histidine 89 and histidine 103 each coordinate heme b. 3 helical membrane-spanning segments follow: residues 93–113, 119–139, and 189–209; these read ASMM…TGGF, LTWV…VTGY, and LHTF…FLMI. Residues histidine 190 and histidine 205 each coordinate heme b.

Belongs to the cytochrome b family. PetB subfamily. As to quaternary structure, the 4 large subunits of the cytochrome b6-f complex are cytochrome b6, subunit IV (17 kDa polypeptide, PetD), cytochrome f and the Rieske protein, while the 4 small subunits are PetG, PetL, PetM and PetN. The complex functions as a dimer. Requires heme b as cofactor. Heme c serves as cofactor.

It is found in the cellular thylakoid membrane. Functionally, component of the cytochrome b6-f complex, which mediates electron transfer between photosystem II (PSII) and photosystem I (PSI), cyclic electron flow around PSI, and state transitions. In Synechococcus sp. (strain CC9902), this protein is Cytochrome b6.